The sequence spans 490 residues: Aspartyl/glutamyl-tRNA(Asn/Gln) amidotransferase subunit B (490 aa).

The protein belongs to the GatB/GatE family. GatB subfamily. In terms of assembly, heterotrimer of A, B and C subunits.

The enzyme catalyses L-glutamyl-tRNA(Gln) + L-glutamine + ATP + H2O = L-glutaminyl-tRNA(Gln) + L-glutamate + ADP + phosphate + H(+). It carries out the reaction L-aspartyl-tRNA(Asn) + L-glutamine + ATP + H2O = L-asparaginyl-tRNA(Asn) + L-glutamate + ADP + phosphate + 2 H(+). Functionally, allows the formation of correctly charged Asn-tRNA(Asn) or Gln-tRNA(Gln) through the transamidation of misacylated Asp-tRNA(Asn) or Glu-tRNA(Gln) in organisms which lack either or both of asparaginyl-tRNA or glutaminyl-tRNA synthetases. The reaction takes place in the presence of glutamine and ATP through an activated phospho-Asp-tRNA(Asn) or phospho-Glu-tRNA(Gln). This chain is Aspartyl/glutamyl-tRNA(Asn/Gln) amidotransferase subunit B, found in Synechococcus sp. (strain JA-2-3B'a(2-13)) (Cyanobacteria bacterium Yellowstone B-Prime).